The following is a 31-amino-acid chain: Cyclotide vibi-F (31 aa).

The cyclopeptide (Gly-Asn) cross-link spans G1 to N31. Disulfide bonds link C5/C21, C9/C23, and C14/C28.

Post-translationally, this is a cyclic peptide.

In terms of biological role, probably participates in a plant defense mechanism. In Viola biflora (Yellow wood violet), this protein is Cyclotide vibi-F.